Consider the following 411-residue polypeptide: MSKVNMRALLESFSTVILSIYPLAKSTNQQSHSHSLSLTQFLYETIRRSRVDYTTLLLALYYFIRFRDAASSKPTNYIPLLCGRRLFLVCLMAATKFLQDRSFSNRAWSRLSGLPVDKLLVLEYMFYQCIDYRLVVPKHIFARWSLLVGECCAHATARYDSTDPNVASFGSVAQYWVSLFSNVQSSLDDLFSIACLTKIAHRRMNANAALKNQATRKPSSSPQTTQDSSPILTMAPSTPVSVGSTPPSTPSVLPIAKQLAPMNVCKAHIQASNQSRTLTTASPPEQIPLMEPQVYVNPQVLPGRLSSLSKPVSLPPTPSSPKVGVYRPMTSKSNGGVAYCYNAQKLNNATGPVTFNMPFASVLPLAVSVSCDLGTASAYVASLPQPCSQKRHLEEDYSCLTEHSAKRRSYF.

Disordered regions lie at residues 210-253 (LKNQ…PSVL) and 307-326 (SLSK…VGVY). The segment covering 218-252 (PSSSPQTTQDSSPILTMAPSTPVSVGSTPPSTPSV) has biased composition (low complexity).

This sequence belongs to the cyclin family.

In terms of biological role, essential for the control of the cell cycle at the G1/S (start) transition. Interacts with the pef1 protein kinase. The pef1/pas1 complex activates the res2/cdc10 complex. This chain is G1/S-specific cyclin pas1 (pas1), found in Schizosaccharomyces pombe (strain 972 / ATCC 24843) (Fission yeast).